Consider the following 204-residue polypeptide: Large ribosomal subunit protein eL15 (204 aa).

This sequence belongs to the eukaryotic ribosomal protein eL15 family. Component of the large ribosomal subunit.

It is found in the cytoplasm. Its function is as follows. Component of the large ribosomal subunit. The ribosome is a large ribonucleoprotein complex responsible for the synthesis of proteins in the cell. The protein is Large ribosomal subunit protein eL15 (rpl15) of Tachysurus fulvidraco (Yellow catfish).